A 796-amino-acid polypeptide reads, in one-letter code: uncharacterized protein (796 aa).

The protein localises to the mitochondrion. This is an uncharacterized protein from Dictyostelium discoideum (Social amoeba).